A 211-amino-acid polypeptide reads, in one-letter code: Arginine exporter protein ArgO (211 aa).

Helical transmembrane passes span 1–21 (MISY…PLGP), 37–57 (LMIA…GIFG), 68–88 (LLAL…FGAL), 111–131 (IIAT…DTFV), 147–167 (WFAL…ALLA), and 179–199 (AQRI…FQLA).

It belongs to the LysE/ArgO transporter (TC 2.A.75) family.

Its subcellular location is the cell inner membrane. It catalyses the reaction L-arginine(in) = L-arginine(out). Involved in the export of arginine. Important to control the intracellular level of arginine and the correct balance between arginine and lysine. The polypeptide is Arginine exporter protein ArgO (Salmonella paratyphi B (strain ATCC BAA-1250 / SPB7)).